Here is a 298-residue protein sequence, read N- to C-terminus: Tyrosine recombinase XerC (298 aa).

The Core-binding (CB) domain occupies 2–88 (TDLHTDVERY…ALRSFFDWLV (87 aa)). The region spanning 109 to 288 (HLPKNIDVDD…DFQHLASVYD (180 aa)) is the Tyr recombinase domain. Active-site residues include Arg148, Lys172, His240, Arg243, and His266. The active-site O-(3'-phospho-DNA)-tyrosine intermediate is the Tyr275.

Belongs to the 'phage' integrase family. XerC subfamily. In terms of assembly, forms a cyclic heterotetrameric complex composed of two molecules of XerC and two molecules of XerD, in which XerC interacts with XerD via its C-terminal region, XerD interacts with XerC via its C-terminal region and so on.

The protein localises to the cytoplasm. With respect to regulation, ftsK may regulate the catalytic switch between XerC and XerD in the heterotetrameric complex during the two steps of the recombination process. Its function is as follows. Site-specific tyrosine recombinase, which acts by catalyzing the cutting and rejoining of the recombining DNA molecules. Binds cooperatively to specific DNA consensus sequences that are separated from XerD binding sites by a short central region, forming the heterotetrameric XerC-XerD complex that recombines DNA substrates. The complex is essential to convert dimers of the bacterial chromosome into monomers to permit their segregation at cell division. It also contributes to the segregational stability of plasmids. In the complex XerC specifically exchanges the top DNA strands. The chain is Tyrosine recombinase XerC from Shigella flexneri serotype 5b (strain 8401).